Here is a 110-residue protein sequence, read N- to C-terminus: Minor capsid protein VP2 (110 aa).

The protein belongs to the vesivirus VP2 protein family. Homooligomer. The portal-like structure consists in 12 copies of VP2. Interacts with capsid protein VP1.

The protein resides in the virion. It is found in the host cytoplasm. Its function is as follows. Minor structural protein that forms a portal-like structure at a unique three-fold axis of symmetry, following binding to the host receptor. The channel formed by VP2 may allow the delivery of the viral genome through the host endosomal membrane. This chain is Minor capsid protein VP2, found in Vesicular exanthema of swine virus serotype A48 (isolate Swine/United States/A48/1948) (VESV).